The chain runs to 502 residues: Chromosomal replication initiator protein DnaA (502 aa).

Positions 1–112 are domain I, interacts with DnaA modulators; that stretch reads MADDLSLGFT…PSTDHIDDNS (112 aa). The domain II stretch occupies residues 113–161; sequence SSADVLLTDDCGTDTDENYGEPLTGEYQGLPTYFTERPHHTESTVTGGT. Residues 162-378 are domain III, AAA+ region; the sequence is SLNRRYTFET…GALIRVTAFA (217 aa). The ATP site is built by Gly206, Gly208, Lys209, and Thr210. The domain IV, binds dsDNA stretch occupies residues 379 to 502; that stretch reads SLNKTAIDKA…TTRIRQRSKR (124 aa).

It belongs to the DnaA family. As to quaternary structure, oligomerizes as a right-handed, spiral filament on DNA at oriC.

It is found in the cytoplasm. In terms of biological role, plays an essential role in the initiation and regulation of chromosomal replication. ATP-DnaA binds to the origin of replication (oriC) to initiate formation of the DNA replication initiation complex once per cell cycle. Binds the DnaA box (a 9 base pair repeat at the origin) and separates the double-stranded (ds)DNA. Forms a right-handed helical filament on oriC DNA; dsDNA binds to the exterior of the filament while single-stranded (ss)DNA is stabiized in the filament's interior. The ATP-DnaA-oriC complex binds and stabilizes one strand of the AT-rich DNA unwinding element (DUE), permitting loading of DNA polymerase. After initiation quickly degrades to an ADP-DnaA complex that is not apt for DNA replication. Binds acidic phospholipids. The chain is Chromosomal replication initiator protein DnaA from Mycobacterium leprae (strain TN).